We begin with the raw amino-acid sequence, 312 residues long: 1-(5-phosphoribosyl)-5-[(5-phosphoribosylamino)methylideneamino] imidazole-4-carboxamide isomerase HISN3, chloroplastic (312 aa).

Residues 1 to 67 (MRSPASTPSI…IHKGKVKQIV (67 aa)) constitute a chloroplast transit peptide. A 1-(5-phospho-beta-D-ribosyl)-5-[(5-phospho-beta-D-ribosylamino)methylideneamino]imidazole-4-carboxamide-binding site is contributed by Asp57. Gln65 contributes to the 5-[(5-phospho-1-deoxy-D-ribulos-1-ylimino)methylamino]-1-(5-phospho-beta-D-ribosyl)imidazole-4-carboxamide binding site. Residues Gln65 and Ile66 each coordinate Na(+). Gly68 contacts 1-(5-phospho-beta-D-ribosyl)-5-[(5-phospho-beta-D-ribosylamino)methylideneamino]imidazole-4-carboxamide. His108, Gly138, Thr158, and Ser159 together coordinate 5-[(5-phospho-1-deoxy-D-ribulos-1-ylimino)methylamino]-1-(5-phospho-beta-D-ribosyl)imidazole-4-carboxamide. Residues Gly138, Thr158, and Ser159 each coordinate 1-(5-phospho-beta-D-ribosyl)-5-[(5-phospho-beta-D-ribosylamino)methylideneamino]imidazole-4-carboxamide. Residues Ser159 and Phe162 each contribute to the Na(+) site. Residues Asp187, Arg203, Trp204, and His230 each coordinate 1-(5-phospho-beta-D-ribosyl)-5-[(5-phospho-beta-D-ribosylamino)methylideneamino]imidazole-4-carboxamide. Asp187 provides a ligand contact to 5-[(5-phospho-1-deoxy-D-ribulos-1-ylimino)methylamino]-1-(5-phospho-beta-D-ribosyl)imidazole-4-carboxamide. Trp204 is a binding site for 5-[(5-phospho-1-deoxy-D-ribulos-1-ylimino)methylamino]-1-(5-phospho-beta-D-ribosyl)imidazole-4-carboxamide. Glu235 contacts Na(+). Gly236, Gly262, Gly285, and Ser286 together coordinate 1-(5-phospho-beta-D-ribosyl)-5-[(5-phospho-beta-D-ribosylamino)methylideneamino]imidazole-4-carboxamide. 4 residues coordinate 5-[(5-phospho-1-deoxy-D-ribulos-1-ylimino)methylamino]-1-(5-phospho-beta-D-ribosyl)imidazole-4-carboxamide: Gly236, Gly262, Gly285, and Ser286.

This sequence belongs to the HisA/HisF family. It depends on Na(+) as a cofactor.

The protein localises to the plastid. Its subcellular location is the chloroplast. It carries out the reaction 1-(5-phospho-beta-D-ribosyl)-5-[(5-phospho-beta-D-ribosylamino)methylideneamino]imidazole-4-carboxamide = 5-[(5-phospho-1-deoxy-D-ribulos-1-ylimino)methylamino]-1-(5-phospho-beta-D-ribosyl)imidazole-4-carboxamide. It participates in amino-acid biosynthesis; L-histidine biosynthesis; L-histidine from 5-phospho-alpha-D-ribose 1-diphosphate: step 4/9. In terms of biological role, component of the histidine biosynthesis pathway that catalyzes the isomerization of 5'-ProFAR (pro-phosphoribosyl formimino-5-aminoimidazole-4-carboxamide ribonucleotide, referred as 1-(5-phospho-beta-D-ribosyl)-5-[(5-phospho-beta-D-ribosylamino)methylideneamino]imidazole-4-carboxamide) to PrFAR (phosphoribulosyl formimino-5-aminoimidazole-4-carboxamide ribonucleotide, referred as 5-[(5-phospho-1-deoxy-D-ribulos-1-ylimino)methylamino]-1-(5-phospho-beta-D-ribosyl)imidazole-4-carboxamide). The chain is 1-(5-phosphoribosyl)-5-[(5-phosphoribosylamino)methylideneamino] imidazole-4-carboxamide isomerase HISN3, chloroplastic from Medicago truncatula (Barrel medic).